The following is a 471-amino-acid chain: Ribosomal protein uS12 methylthiotransferase RimO (471 aa).

In terms of domain architecture, MTTase N-terminal spans 19 to 134 (PRVGFVSLGC…VMNAVHTHLP (116 aa)). The [4Fe-4S] cluster site is built by C28, C64, C93, C169, C173, and C176. Residues 155–396 (LTPRHYAYLK…MAVAEEVSTA (242 aa)) form the Radical SAM core domain. A TRAM domain is found at 399–471 (QKRVGQTMQV…QGHDLVGQPV (73 aa)).

This sequence belongs to the methylthiotransferase family. RimO subfamily. Requires [4Fe-4S] cluster as cofactor.

The protein resides in the cytoplasm. The enzyme catalyses L-aspartate(89)-[ribosomal protein uS12]-hydrogen + (sulfur carrier)-SH + AH2 + 2 S-adenosyl-L-methionine = 3-methylsulfanyl-L-aspartate(89)-[ribosomal protein uS12]-hydrogen + (sulfur carrier)-H + 5'-deoxyadenosine + L-methionine + A + S-adenosyl-L-homocysteine + 2 H(+). Functionally, catalyzes the methylthiolation of an aspartic acid residue of ribosomal protein uS12. The polypeptide is Ribosomal protein uS12 methylthiotransferase RimO (Delftia acidovorans (strain DSM 14801 / SPH-1)).